The sequence spans 283 residues: MLMDGKELARDIKVKIKAEIDNIKKIHNINPMVATILVGDDPASQVYLNSQVKSYQDLGIGVQKYFFSEEISEAYLLNLIDKLNKDTEVDGIMINLPLPPQINATKVLNSIKLIKDVDGFKAENLGLLFQNNEGFTSPSTPAGIMALIEKYNIDLEGKDVVVVGSSNIVGKPIAALILNSRGTVTICNIYTKNLAEKTKNADILISAVGKAKLITEDMVKEGAVVIDVGINRVNGKLEGDVDFENVQKKASHITPVPGGVGALTVAMLLSNILKSFKANRGII.

NADP(+) contacts are provided by residues 164–166, Ile-189, and Ile-230; that span reads GSS.

This sequence belongs to the tetrahydrofolate dehydrogenase/cyclohydrolase family. As to quaternary structure, homodimer.

The catalysed reaction is (6R)-5,10-methylene-5,6,7,8-tetrahydrofolate + NADP(+) = (6R)-5,10-methenyltetrahydrofolate + NADPH. It carries out the reaction (6R)-5,10-methenyltetrahydrofolate + H2O = (6R)-10-formyltetrahydrofolate + H(+). It functions in the pathway one-carbon metabolism; tetrahydrofolate interconversion. Its function is as follows. Catalyzes the oxidation of 5,10-methylenetetrahydrofolate to 5,10-methenyltetrahydrofolate and then the hydrolysis of 5,10-methenyltetrahydrofolate to 10-formyltetrahydrofolate. This is Bifunctional protein FolD from Fusobacterium nucleatum subsp. nucleatum (strain ATCC 25586 / DSM 15643 / BCRC 10681 / CIP 101130 / JCM 8532 / KCTC 2640 / LMG 13131 / VPI 4355).